The following is a 184-amino-acid chain: Ribosome-recycling factor (184 aa).

The protein belongs to the RRF family.

It is found in the cytoplasm. Its function is as follows. Responsible for the release of ribosomes from messenger RNA at the termination of protein biosynthesis. May increase the efficiency of translation by recycling ribosomes from one round of translation to another. In Onion yellows phytoplasma (strain OY-M), this protein is Ribosome-recycling factor.